A 531-amino-acid polypeptide reads, in one-letter code: Calcium-dependent protein kinase 21 (531 aa).

Over residues methionine 1–lysine 10 the composition is skewed to basic residues. Residues methionine 1–valine 62 form a disordered region. Glycine 2 is lipidated: N-myristoyl glycine. Residues isoleucine 48–valine 60 are compositionally biased toward polar residues. The region spanning tyrosine 80 to isoleucine 338 is the Protein kinase domain. Residues leucine 86–threonine 94 and lysine 109 contribute to the ATP site. Aspartate 204 functions as the Proton acceptor in the catalytic mechanism. At serine 244 the chain carries Phosphoserine. The autoinhibitory domain stretch occupies residues alanine 343–isoleucine 373. EF-hand domains lie at glutamate 380–arginine 415, leucine 416–leucine 451, aspartate 452–glycine 487, and aspartate 488–glutamine 522. Positions 393, 395, 397, 399, 404, 429, 431, 433, 435, 440, 465, 467, 469, 471, 476, 500, 502, 504, 506, and 511 each coordinate Ca(2+).

This sequence belongs to the protein kinase superfamily. Ser/Thr protein kinase family. CDPK subfamily. As to quaternary structure, interacts with SLAC1 and ABI1.

Its subcellular location is the cell membrane. The enzyme catalyses L-seryl-[protein] + ATP = O-phospho-L-seryl-[protein] + ADP + H(+). The catalysed reaction is L-threonyl-[protein] + ATP = O-phospho-L-threonyl-[protein] + ADP + H(+). Activated by calcium. Autophosphorylation may play an important role in the regulation of the kinase activity. In terms of biological role, may play a role in signal transduction pathways that involve calcium as a second messenger. Mediates the phosphorylation and activation of the S-type anion efflux channel SLAC1. The protein is Calcium-dependent protein kinase 21 (CPK21) of Arabidopsis thaliana (Mouse-ear cress).